A 205-amino-acid polypeptide reads, in one-letter code: Basigin (205 aa).

Residues 1–18 form the signal peptide; that stretch reads MAAALFVLLGFALLGTHG. In terms of domain architecture, Ig-like C2-type spans 19–103; it reads ASGAAGTVFT…MGTANIQLHG (85 aa). At 19–205 the chain is on the extracellular side; it reads ASGAAGTVFT…AIITLRVRSH (187 aa). Cystine bridges form between Cys41/Cys87 and Cys126/Cys185. N-linked (GlcNAc...) asparagine glycosylation is found at Asn44, Asn152, and Asn186. The Ig-like V-type domain occupies 105–199; the sequence is PRVKAVKSSE…SKGSDQAIIT (95 aa).

As to quaternary structure, homooligomer. Interacts with VEGFA, KDR/VEGFR2, PPIA/CYPA, SLC16A12, SLC16A11, ATP1B2, MAG, L1CAM and AJAP1. Interacts with SLC16A1; interaction mediates SLC16A1 targeting to the plasma membrane. Interacts with SLC16A3; interaction mediates SLC16A3 targeting to the plasma membrane. Interacts with PPIL2; regulates BSG transport to the cell membrane. Interacts with XKR8; promoting its localization at the cell membrane. Interacts with SLC16A6; this interaction mediates targeting to the plasma membrane.

Its subcellular location is the cell membrane. The protein resides in the endoplasmic reticulum membrane. The protein localises to the basolateral cell membrane. Its function is as follows. Signaling receptor for cyclophilins, essential for PPIA/CYPA and PPIB/CYPB-dependent signaling related to chemotaxis and adhesion of immune cells. Plays an important role in targeting the monocarboxylate transporters SLC16A1/GLUT1, SLC16A3, SLC16A8, SLC16A11 and SLC16A12 to the plasma membrane. Acts as a coreceptor for vascular endothelial growth factor receptor 2 (KDR/VEGFR2) in endothelial cells enhancing its VEGFA-mediated activation and downstream signaling. Promotes angiogenesis through EPAS1/HIF2A-mediated up-regulation of VEGFA and KDR/VEGFR2 in endothelial cells. This chain is Basigin (BSG), found in Bos taurus (Bovine).